A 484-amino-acid chain; its full sequence is Cobyric acid synthase (484 aa).

A GATase cobBQ-type domain is found at 248–435 (VLKVIVPVLP…LHGLFEGSQS (188 aa)). Cys-329 (nucleophile) is an active-site residue. His-427 is an active-site residue.

It belongs to the CobB/CobQ family. CobQ subfamily.

It participates in cofactor biosynthesis; adenosylcobalamin biosynthesis. Its function is as follows. Catalyzes amidations at positions B, D, E, and G on adenosylcobyrinic A,C-diamide. NH(2) groups are provided by glutamine, and one molecule of ATP is hydrogenolyzed for each amidation. The chain is Cobyric acid synthase from Pseudomonas putida (strain GB-1).